Here is a 120-residue protein sequence, read N- to C-terminus: Secreted RxLR effector protein 29 (120 aa).

Positions 1-21 are cleaved as a signal peptide; that stretch reads MRRTAFIVLSLVALIAPCVTS. The RxLR-dEER signature appears at 47-64; sequence RHLRSEANGRLAVVDEEK.

The protein belongs to the RxLR effector family.

Its subcellular location is the secreted. The protein resides in the host cytoplasm. The protein localises to the host nucleus. In terms of biological role, effector that acts as a broad suppressor of cell death to interrupt plant immunity. Inhibits cell death induced by cell death-inducing proteins, including the PAMP elicitor INF1 from P.infestans. This chain is Secreted RxLR effector protein 29, found in Plasmopara viticola (Downy mildew of grapevine).